We begin with the raw amino-acid sequence, 152 residues long: Lipoprotein signal peptidase (152 aa).

2 helical membrane-spanning segments follow: residues 55–75 and 87–107; these read NGRWFFVAVAALAVAGILYYL and VALGLVMGGAVGNMIDRIATG. Active-site residues include aspartate 111 and aspartate 129. A helical transmembrane segment spans residues 125–145; sequence FNVADICVTVGVGLLFLHLVL.

This sequence belongs to the peptidase A8 family.

It localises to the cell membrane. It catalyses the reaction Release of signal peptides from bacterial membrane prolipoproteins. Hydrolyzes -Xaa-Yaa-Zaa-|-(S,diacylglyceryl)Cys-, in which Xaa is hydrophobic (preferably Leu), and Yaa (Ala or Ser) and Zaa (Gly or Ala) have small, neutral side chains.. It functions in the pathway protein modification; lipoprotein biosynthesis (signal peptide cleavage). In terms of biological role, this protein specifically catalyzes the removal of signal peptides from prolipoproteins. The chain is Lipoprotein signal peptidase from Symbiobacterium thermophilum (strain DSM 24528 / JCM 14929 / IAM 14863 / T).